Consider the following 111-residue polypeptide: Cytochrome c oxidase subunit 6A1, mitochondrial (111 aa).

Residues 1 to 26 (MASAVLSASRVSGLLGRALPRVGRPM) constitute a mitochondrion transit peptide. Residues 27 to 36 (SSGAHGEEGS) are Mitochondrial matrix-facing. Residues 37-61 (ARIWKALTYFVALPGVGVSMLNVFL) traverse the membrane as a helical segment. Topologically, residues 62 to 111 (KSRHEEHERPEFVAYPHLRIRTKPFPWGDGNHTLFHNPHMNPLPTGYEDE) are mitochondrial intermembrane.

It belongs to the cytochrome c oxidase subunit 6A family. As to quaternary structure, component of the cytochrome c oxidase (complex IV, CIV), a multisubunit enzyme composed of 14 subunits. The complex is composed of a catalytic core of 3 subunits MT-CO1, MT-CO2 and MT-CO3, encoded in the mitochondrial DNA, and 11 supernumerary subunits COX4I, COX5A, COX5B, COX6A, COX6B, COX6C, COX7A, COX7B, COX7C, COX8 and NDUFA4, which are encoded in the nuclear genome. The complex exists as a monomer or a dimer and forms supercomplexes (SCs) in the inner mitochondrial membrane with NADH-ubiquinone oxidoreductase (complex I, CI) and ubiquinol-cytochrome c oxidoreductase (cytochrome b-c1 complex, complex III, CIII), resulting in different assemblies (supercomplex SCI(1)III(2)IV(1) and megacomplex MCI(2)III(2)IV(2)).

Its subcellular location is the mitochondrion inner membrane. Its pathway is energy metabolism; oxidative phosphorylation. Component of the cytochrome c oxidase, the last enzyme in the mitochondrial electron transport chain which drives oxidative phosphorylation. The respiratory chain contains 3 multisubunit complexes succinate dehydrogenase (complex II, CII), ubiquinol-cytochrome c oxidoreductase (cytochrome b-c1 complex, complex III, CIII) and cytochrome c oxidase (complex IV, CIV), that cooperate to transfer electrons derived from NADH and succinate to molecular oxygen, creating an electrochemical gradient over the inner membrane that drives transmembrane transport and the ATP synthase. Cytochrome c oxidase is the component of the respiratory chain that catalyzes the reduction of oxygen to water. Electrons originating from reduced cytochrome c in the intermembrane space (IMS) are transferred via the dinuclear copper A center (CU(A)) of subunit 2 and heme A of subunit 1 to the active site in subunit 1, a binuclear center (BNC) formed by heme A3 and copper B (CU(B)). The BNC reduces molecular oxygen to 2 water molecules unsing 4 electrons from cytochrome c in the IMS and 4 protons from the mitochondrial matrix. This is Cytochrome c oxidase subunit 6A1, mitochondrial (Cox6a1) from Rattus norvegicus (Rat).